We begin with the raw amino-acid sequence, 20 residues long: Hemocyanin subunit II (20 aa).

The disordered stretch occupies residues 1–20 (DVVASSTAHKQQDINHLLDK). A compositionally biased stretch (basic and acidic residues) spans 10-20 (KQQDINHLLDK).

It belongs to the tyrosinase family. Hemocyanin subfamily. As to quaternary structure, composed of 3 major subunits (IB, II and III) and 1 minor subunit (IA) which form homohexamers and heterohexamers. May also form larger structures. As to expression, hemolymph.

It is found in the secreted. Its subcellular location is the extracellular space. In terms of biological role, hemocyanins are copper-containing oxygen carriers occurring freely dissolved in the hemolymph of many mollusks and arthropods. The chain is Hemocyanin subunit II from Panulirus japonicus (Japanese spiny lobster).